Reading from the N-terminus, the 304-residue chain is uncharacterized protein (304 aa).

The next 10 membrane-spanning stretches (helical) occupy residues 5 to 25, 42 to 62, 68 to 88, 96 to 116, 120 to 140, 150 to 170, 178 to 198, 215 to 235, 245 to 265, and 268 to 288; these read TIILLLFIIVSITWGTTFIAI, FLLASFFLIFLCFYTKTPLLF, IFQLIICIFYFSLPFLLILYG, IASVIFAIMPIIVLFLSFIFF, LYFFQFIGLVLAIIFLSIILF, TIKGVIALLLAMTSHAIIYLY, ISILTFNALPSLLSGLFFLVI, ILATFYLSYFSGVFGILSYFY, ASTIFFIFPIINLMLEEFVWG, and IGIDQLQLIVFLMSSILITIF. EamA domains lie at 16-140 and 162-288; these read ITWG…IILF and TSHA…ITIF.

This sequence belongs to the EamA transporter family.

Its subcellular location is the cell membrane. This is an uncharacterized protein from Buchnera aphidicola subsp. Schlechtendalia chinensis.